The sequence spans 157 residues: Endoribonuclease YbeY (157 aa).

Residues histidine 114, histidine 118, and histidine 124 each coordinate Zn(2+).

It belongs to the endoribonuclease YbeY family. Zn(2+) serves as cofactor.

The protein resides in the cytoplasm. Its function is as follows. Single strand-specific metallo-endoribonuclease involved in late-stage 70S ribosome quality control and in maturation of the 3' terminus of the 16S rRNA. The protein is Endoribonuclease YbeY of Klebsiella pneumoniae (strain 342).